Consider the following 646-residue polypeptide: WW domain-containing adapter protein with coiled-coil (646 aa).

The segment at methionine 1 to histidine 138 is disordered. A compositionally biased stretch (polar residues) spans glutamine 23–serine 37. Over residues serine 38–alanine 50 the composition is skewed to basic and acidic residues. Position 53 is a phosphoserine (serine 53). Positions arginine 61–histidine 75 are enriched in polar residues. Over residues asparagine 103–serine 122 the composition is skewed to low complexity. The WW domain occupies tyrosine 129 to glutamate 162. Serine 131 and serine 142 each carry phosphoserine. Basic and acidic residues-rich tracts occupy residues glutamate 158–asparagine 174 and proline 182–valine 191. 2 disordered regions span residues glutamate 158–threonine 352 and threonine 428–valine 541. Over residues aspartate 211–serine 225 the composition is skewed to polar residues. Serine 225 bears the Phosphoserine mark. The segment covering arginine 226–threonine 239 has biased composition (basic and acidic residues). Positions proline 252 to proline 267 are enriched in low complexity. A compositionally biased stretch (polar residues) spans glycine 284–alanine 300. At threonine 293 the chain carries Phosphothreonine. Position 302 is an N6-acetyllysine (lysine 302). Residues serine 316 to asparagine 331 are compositionally biased toward polar residues. Residues proline 332–serine 351 are compositionally biased toward low complexity. Residues threonine 428 to valine 463 are compositionally biased toward polar residues. Serine 446 carries the phosphoserine modification. The residue at position 471 (threonine 471) is a Phosphothreonine. The segment covering valine 490–lysine 503 has biased composition (polar residues). 3 positions are modified to phosphoserine: serine 511, serine 523, and serine 525. A compositionally biased stretch (low complexity) spans serine 511 to proline 524. The segment covering proline 528–valine 541 has biased composition (polar residues). Positions glutamine 617–serine 643 form a coiled coil.

Interacts (via coiled coil domain) with RNF20, RNF40 and UBE2A. Interacts (via WW domain) with RNA polymerase II. Interacts with MTOR and other components of the MTOR pathway including RPTOR, RUVBL1, RUVBL2, TTI1 and TTI2. Phosphorylated on tyrosine residues.

The protein resides in the nucleus speckle. The protein localises to the nucleus. Functionally, acts as a linker between gene transcription and histone H2B monoubiquitination at 'Lys-120' (H2BK120ub1). Interacts with the RNA polymerase II transcriptional machinery via its WW domain and with RNF20-RNF40 via its coiled coil region, thereby linking and regulating H2BK120ub1 and gene transcription. Regulates the cell-cycle checkpoint activation in response to DNA damage. Positive regulator of amino acid starvation-induced autophagy. Also acts as a negative regulator of basal autophagy. Positively regulates MTOR activity by promoting, in an energy-dependent manner, the assembly of the TTT complex composed of TELO2, TTI1 and TTI2 and the RUVBL complex composed of RUVBL1 and RUVBL2 into the TTT-RUVBL complex. This leads to the dimerization of the mTORC1 complex and its subsequent activation. May negatively regulate the ubiquitin proteasome pathway. This is WW domain-containing adapter protein with coiled-coil (Wac) from Mus musculus (Mouse).